Here is a 494-residue protein sequence, read N- to C-terminus: Probable malate:quinone oxidoreductase (494 aa).

Belongs to the MQO family. FAD is required as a cofactor.

It carries out the reaction (S)-malate + a quinone = a quinol + oxaloacetate. It participates in carbohydrate metabolism; tricarboxylic acid cycle; oxaloacetate from (S)-malate (quinone route): step 1/1. This is Probable malate:quinone oxidoreductase from Micrococcus luteus (strain ATCC 4698 / DSM 20030 / JCM 1464 / CCM 169 / CCUG 5858 / IAM 1056 / NBRC 3333 / NCIMB 9278 / NCTC 2665 / VKM Ac-2230) (Micrococcus lysodeikticus).